We begin with the raw amino-acid sequence, 76 residues long: UPF0248 protein MmarC5_1387 (76 aa).

This sequence belongs to the UPF0248 family.

The chain is UPF0248 protein MmarC5_1387 from Methanococcus maripaludis (strain C5 / ATCC BAA-1333).